A 1821-amino-acid chain; its full sequence is Latent-transforming growth factor beta-binding protein 2 (1821 aa).

A signal peptide spans 1 to 35; sequence MRPRTKARSPGRALRNPWRGFLPLTLALFVGAGHA. Disordered stretches follow at residues 38–58 and 81–165; these read DPVG…RPGG and GLQP…RLTG. Residues 94-115 form a heparin-binding region; it reads SPRRPTEAEARRPSRAQQSRRV. Low complexity-rich tracts occupy residues 108 to 120 and 129 to 145; these read RAQQ…PPAQ and QQQP…LPRL. Asparagine 181 carries an N-linked (GlcNAc...) asparagine glycan. An EGF-like 1 domain is found at 187-219; sequence IKPVCEPPCQNRGSCSRPQLCVCRSGFRGARCE. 3 disulfides stabilise this stretch: cysteine 191-cysteine 201, cysteine 195-cysteine 207, and cysteine 209-cysteine 218. The disordered stretch occupies residues 229–339; that stretch reads PQNSRLAPRR…AVPLEHPSSP (111 aa). Positions 232–249 are heparin-binding; the sequence is SRLAPRRWAERSPNLRRS. Pro residues predominate over residues 262–274; the sequence is PPAPQSPPAPQSP. Composition is skewed to polar residues over residues 280–292 and 304–314; these read SGLS…QQHV and ATASSQLSSNA. N-linked (GlcNAc...) asparagine glycosylation occurs at asparagine 343. Residue 344 to 354 participates in heparin binding; sequence LTEKIKKIKIV. Positions 375–377 match the Cell attachment site motif; the sequence is RGD. Residues 396 to 428 enclose the EGF-like 2 domain; sequence RIYFCQIPCLNGGRCIGRDECWCPANSTGKFCH. Disulfide bonds link cysteine 400/cysteine 410, cysteine 404/cysteine 416, and cysteine 418/cysteine 427. Asparagine 421 carries N-linked (GlcNAc...) asparagine glycosylation. Serine 506 carries the post-translational modification Phosphoserine. Residues 510 to 544 are disordered; sequence RPPPWLPASPGHSLWDSNNIPARSGEPPRPLPPAA. Positions 552–604 constitute a TB 1 domain; sequence GRCYLNTVNGQCANPLLELTTQEDCCGSVGAFWGVTLCAPCPPRPASPVIENG. 3 disulfides stabilise this stretch: cysteine 554-cysteine 576, cysteine 563-cysteine 589, and cysteine 577-cysteine 592. N-linked (GlcNAc...) asparagine glycosylation is present at asparagine 616. Residues 622 to 662 form the EGF-like 3; calcium-binding domain; sequence DINECLTLGLCKDAECVNTRGSYLCTCRPGLMLDPSRSRCV. 7 disulfide bridges follow: cysteine 626–cysteine 637, cysteine 632–cysteine 646, cysteine 648–cysteine 661, cysteine 674–cysteine 696, cysteine 683–cysteine 709, cysteine 697–cysteine 712, and cysteine 698–cysteine 724. Residues 672 to 724 enclose the TB 2 domain; sequence GLCYRSLGPGTCTLPLAQRITKQICCCSRVGKAWGSECEKCPLPGTEAFREIC. A compositionally biased stretch (basic and acidic residues) spans 744 to 757; it reads AEEEELARPPREQG. Residues 744 to 772 form a disordered region; that stretch reads AEEEELARPPREQGQRSSGALPGPAERQP. N-linked (GlcNAc...) asparagine glycosylation occurs at asparagine 811. The region spanning 844–886 is the EGF-like 4 domain; sequence GIDRCAAGATNVCGPGTCVNLPDGYRCVCSPGYQLHPSQAYCT. Disulfide bonds link cysteine 848–cysteine 861, cysteine 856–cysteine 870, cysteine 872–cysteine 885, cysteine 891–cysteine 902, cysteine 896–cysteine 911, cysteine 913–cysteine 928, cysteine 934–cysteine 945, cysteine 940–cysteine 954, cysteine 956–cysteine 968, cysteine 974–cysteine 985, cysteine 980–cysteine 994, cysteine 997–cysteine 1008, cysteine 1014–cysteine 1025, cysteine 1020–cysteine 1034, cysteine 1036–cysteine 1049, cysteine 1055–cysteine 1066, cysteine 1061–cysteine 1075, cysteine 1078–cysteine 1091, cysteine 1097–cysteine 1108, cysteine 1103–cysteine 1117, cysteine 1120–cysteine 1133, cysteine 1139–cysteine 1151, cysteine 1146–cysteine 1160, cysteine 1162–cysteine 1174, cysteine 1180–cysteine 1192, cysteine 1186–cysteine 1201, cysteine 1203–cysteine 1216, cysteine 1222–cysteine 1233, cysteine 1228–cysteine 1242, cysteine 1244–cysteine 1257, cysteine 1263–cysteine 1276, cysteine 1271–cysteine 1285, cysteine 1289–cysteine 1301, cysteine 1307–cysteine 1319, cysteine 1313–cysteine 1328, cysteine 1330–cysteine 1343, cysteine 1349–cysteine 1361, cysteine 1356–cysteine 1370, cysteine 1372–cysteine 1386, cysteine 1413–cysteine 1436, cysteine 1423–cysteine 1448, cysteine 1437–cysteine 1451, cysteine 1438–cysteine 1463, cysteine 1489–cysteine 1502, cysteine 1497–cysteine 1511, cysteine 1513–cysteine 1526, cysteine 1532–cysteine 1542, cysteine 1537–cysteine 1551, and cysteine 1553–cysteine 1566. In terms of domain architecture, EGF-like 5; calcium-binding spans 887-929; sequence DDNECLRDPCKGKGRCINRVGSYSCFCYPGYTLATSGATQECQ. Residues 930–969 form the EGF-like 6; calcium-binding domain; that stretch reads DINECEQPGVCSGGQCTNTEGSYHCECDQGYIMVRKGHCQ. The EGF-like 7; calcium-binding domain occupies 970-1009; the sequence is DINECRHPGTCPDGRCVNSPGSYTCLACEEGYRGQSGSCV. Positions 1010–1050 constitute an EGF-like 8; calcium-binding domain; it reads DVNECLTPGVCAHGKCTNLEGSFRCSCEQGYEVTSDEKGCQ. The EGF-like 9; calcium-binding domain maps to 1051–1092; sequence DVDECASRASCPTGLCLNTEGSFACSACENGYWVNEDGTACE. Positions 1093–1134 constitute an EGF-like 10; calcium-binding domain; sequence DLDECAFPGVCPSGVCTNTAGSFSCKDCDGGYRPSPLGDSCE. Positions 1135–1175 constitute an EGF-like 11; calcium-binding domain; the sequence is DVDECEDPQSSCLGGECKNTVGSYQCLCPQGFQLANGTVCE. Asparagine 1170 carries an N-linked (GlcNAc...) asparagine glycan. One can recognise an EGF-like 12; calcium-binding domain in the interval 1176–1217; that stretch reads DVNECMGEEHCAPHGECLNSHGSFFCLCAPGFVSAEGGTSCQ. Residues 1218-1258 form the EGF-like 13; calcium-binding domain; it reads DVDECATTDPCVGGHCVNTEGSFNCLCETGFQPSPESGECV. The EGF-like 14; calcium-binding domain maps to 1259 to 1302; the sequence is DIDECEDYGDPVCGTWKCENSPGSYRCVLGCQPGFHMAPNGDCI. The EGF-like 15; calcium-binding domain maps to 1303 to 1344; sequence DIDECANDTMCGSHGFCDNTDGSFRCLCDQGFEISPSGWDCV. The N-linked (GlcNAc...) asparagine glycan is linked to asparagine 1309. Residues 1345–1387 enclose the EGF-like 16; calcium-binding domain; it reads DVNECELMLAVCGAALCENVEGSFLCLCASDLEEYDAQEGHCR. Residues 1411–1463 enclose the TB 3 domain; it reads MDCYSGQKGHAPCSSVLGRNTTQAECCCTQGASWGDACDLCPSEDSAEFSEIC. N-linked (GlcNAc...) asparagine glycosylation is present at asparagine 1430. One can recognise an EGF-like 17; calcium-binding domain in the interval 1485 to 1527; that stretch reads DADECVIFGPGLCPNGRCLNTVPGYVCLCNPGFHYDASHKKCE. In terms of domain architecture, EGF-like 18; calcium-binding spans 1528–1567; that stretch reads DHDECQDLACENGECVNTEGSFHCFCSPPLTLDLSQQRCM. Asparagine 1568 is a glycosylation site (N-linked (GlcNAc...) asparagine). One can recognise a TB 4 domain in the interval 1584–1636; the sequence is DICWKKVTNDVCSEPLRGHRTTYTECCCQDGEAWSQQCALCPPRSSEVYAQLC. 10 cysteine pairs are disulfide-bonded: cysteine 1586-cysteine 1609, cysteine 1595-cysteine 1621, cysteine 1610-cysteine 1624, cysteine 1611-cysteine 1636, cysteine 1737-cysteine 1748, cysteine 1743-cysteine 1757, cysteine 1759-cysteine 1772, cysteine 1778-cysteine 1793, cysteine 1788-cysteine 1802, and cysteine 1804-cysteine 1817. A C-terminal domain region spans residues 1639–1821; that stretch reads ARIEAEREAG…AGPPHCTAKE (183 aa). An EGF-like 19; calcium-binding domain is found at 1733–1773; sequence QAEECGILNGCENGRCVRVREGYTCDCFEGFQLDAAHMACV. An EGF-like 20; calcium-binding domain is found at 1774 to 1818; sequence DVNECDDLNGPAVLCVHGYCENTEGSYRCHCSPGYVAEAGPPHCT.

This sequence belongs to the LTBP family. In terms of assembly, forms part of the large latent transforming growth factor beta precursor complex; removal is essential for activation of complex. Interacts with SDC4. Interacts (via C-terminal domain) with FBN1 (via N-terminal domain) in a Ca(+2)-dependent manner. In terms of processing, N-Glycosylated. Contains hydroxylated asparagine residues. As to expression, expressed in the aorta (at protein level). Expressed in lung, weakly expressed in heart, placenta, liver and skeletal muscle.

It is found in the secreted. The protein resides in the extracellular space. Its subcellular location is the extracellular matrix. May play an integral structural role in elastic-fiber architectural organization and/or assembly. The sequence is that of Latent-transforming growth factor beta-binding protein 2 (LTBP2) from Homo sapiens (Human).